A 192-amino-acid polypeptide reads, in one-letter code: uncharacterized protein (192 aa).

This sequence belongs to the IIV-6 358L family.

This is an uncharacterized protein from Aedes vexans (Inland floodwater mosquito).